The sequence spans 620 residues: Chaperone protein DnaK (620 aa).

Residue T197 is modified to Phosphothreonine; by autocatalysis. The segment at 597-620 is disordered; it reads AMANKNNAEQPKKKDDDVIDAEVE.

This sequence belongs to the heat shock protein 70 family.

In terms of biological role, acts as a chaperone. The sequence is that of Chaperone protein DnaK from Helicobacter pylori (strain G27).